Here is a 233-residue protein sequence, read N- to C-terminus: Small ribosomal subunit protein uS2 (233 aa).

Belongs to the universal ribosomal protein uS2 family.

The sequence is that of Small ribosomal subunit protein uS2 from Clostridium perfringens (strain ATCC 13124 / DSM 756 / JCM 1290 / NCIMB 6125 / NCTC 8237 / Type A).